Consider the following 4363-residue polypeptide: AM-toxin synthetase AMT1 (4363 aa).

The tract at residues 278 to 670 (AGQAKQRPHA…GSLLYVGRKD (393 aa)) is adenylation 1. The region spanning 810–887 (APDSVIARQL…ALAAIAKVIP (78 aa)) is the Carrier 1 domain. At Ser-847 the chain carries O-(pantetheine 4'-phosphoryl)serine. Residues 926–1340 (EDVYACTPLQ…TLGQIDVLTS (415 aa)) are condensation 1. Residues 1368–1765 (KQARTRPGAI…LGRKDTQIKI (398 aa)) form an adenylation 2 region. The Carrier 2 domain maps to 1884 to 1961 (PPVTDMEKHV…DQARHVTLLT (78 aa)). Residue Ser-1922 is modified to O-(pantetheine 4'-phosphoryl)serine. The interval 1999-2410 (EDVYPCTPLQ…ASPSSSTLVS (412 aa)) is condensation 2. The tract at residues 2448–2853 (RKKALAAPQA…GRKDNQVKIR (406 aa)) is adenylation 3. Residues 2977-3053 (LPSTVMEETL…DLAACCTDRR (77 aa)) form the Carrier 3 domain. Ser-3014 carries the O-(pantetheine 4'-phosphoryl)serine modification. The condensation 3 stretch occupies residues 3098–3503 (VEDVYPCTPM…ELVSSIETLN (406 aa)). The Carrier 4 domain occupies 3730-3806 (PAVTAMQLAI…SLAVRATENT (77 aa)). Ser-3767 carries the post-translational modification O-(pantetheine 4'-phosphoryl)serine. The condensation 4 stretch occupies residues 3850 to 4204 (QDVLPCTSMQ…GLDEIVEHYA (355 aa)).

This sequence belongs to the NRP synthetase family.

It participates in mycotoxin biosynthesis. In terms of biological role, nonribosomal peptide synthetase; part of the gene clusters that mediate the biosynthesis of AM-toxins, host-selective toxins (HSTs) causing Alternaria blotch on apple, a worldwide distributed disease. AM-toxins are cyclic depsipeptides containing the 3 residues 2-hydroxy-isovaleric acid (2-HIV), dehydroalanine, L-alanine which are common for all 3 AM-toxins I to III. The fourth precursor is L-alpha-amino-methoxyphenyl-valeric acid (L-Amv) for AM-toxin I, L-alpha-amino-phenyl-valeric acid (L-Apv) for AM-toxin II, and L-alpha-amino-hydroxyphenyl-valeric acid (L-Ahv) for AM-toxin III. AM-toxins have two target sites for affecting susceptible apple cells; they cause invagination of the plasma membrane and electrolyte loss, and chloroplast disorganization. The non-ribosomal peptide synthetase AMT1 contains 4 catalytic modules and is responsible for activation of each residue in AM-toxin. The aldo-keto reductase AMT2 catalyzes the conversion of 2-keto-isovaleric acid (2-KIV) to 2-hydroxy-isovaleric acid (2-HIV), one of the precursor residues incorporated by AMT1 during AM-toxin biosynthesis, by reduction of its ketone to an alcohol. The cytochrome P450 monooxygenase AMT3 and the thioesterase AMT4 are also important for AM-toxin production, but their exact function within the AM-toxin biosynthesis are not known yet. Up to 21 proteins (including AMT1 to AMT4) are predicted to be involved in AM-toxin biosynthesis since their expression ishighly up-regulated in AM-toxin-producing cultures. The protein is AM-toxin synthetase AMT1 of Alternaria alternata (Alternaria rot fungus).